The sequence spans 33 residues: Brevinin-2Rk (33 aa).

C27 and C33 form a disulfide bridge.

Expressed by the skin glands.

It localises to the secreted. Its function is as follows. Antimicrobial peptide. In Pelophylax ridibundus (Marsh frog), this protein is Brevinin-2Rk.